Reading from the N-terminus, the 246-residue chain is tRNA pseudouridine synthase A (246 aa).

Asp52 functions as the Nucleophile in the catalytic mechanism. Tyr111 is a binding site for substrate.

The protein belongs to the tRNA pseudouridine synthase TruA family. Homodimer.

The enzyme catalyses uridine(38/39/40) in tRNA = pseudouridine(38/39/40) in tRNA. Its function is as follows. Formation of pseudouridine at positions 38, 39 and 40 in the anticodon stem and loop of transfer RNAs. The sequence is that of tRNA pseudouridine synthase A from Ehrlichia ruminantium (strain Welgevonden).